Here is a 543-residue protein sequence, read N- to C-terminus: Zinc finger CCHC domain-containing protein 7 (543 aa).

Residues 51–71 (EEEHEEKNSGNSESSSSKPNQ) form a disordered region. Positions 59–68 (SGNSESSSSK) are enriched in low complexity. Glycyl lysine isopeptide (Lys-Gly) (interchain with G-Cter in SUMO2) cross-links involve residues Lys131, Lys139, Lys141, Lys239, and Lys254. CCHC-type zinc fingers lie at residues 241–258 (IICR…NCPL), 263–280 (RRCF…SCPA), and 304–321 (KQCD…ACTE). Residue Lys339 forms a Glycyl lysine isopeptide (Lys-Gly) (interchain with G-Cter in SUMO2) linkage. The CCHC-type 4 zinc finger occupies 348-365 (AYCYHCAQKGHYGHECPE). Glycyl lysine isopeptide (Lys-Gly) (interchain with G-Cter in SUMO2) cross-links involve residues Lys412, Lys417, and Lys435. The tract at residues 414–543 (PYIKAANENP…FLIKQRKKKS (130 aa)) is disordered. Basic and acidic residues-rich tracts occupy residues 441–457 (QENK…NRNW) and 465–475 (RHREVDEDFPR). Residue Lys478 forms a Glycyl lysine isopeptide (Lys-Gly) (interchain with G-Cter in SUMO2) linkage. Residues 479 to 491 (TYSSPGSFKTQKP) are compositionally biased toward polar residues. Ser482 and Ser485 each carry phosphoserine. Residues Lys487, Lys490, and Lys493 each participate in a glycyl lysine isopeptide (Lys-Gly) (interchain with G-Cter in SUMO2) cross-link. Residues 493–502 (KPFHRSSHYH) are compositionally biased toward basic residues. Positions 503-515 (TSREDKSPKEGKR) are enriched in basic and acidic residues. Lys537 participates in a covalent cross-link: Glycyl lysine isopeptide (Lys-Gly) (interchain with G-Cter in SUMO2).

As to quaternary structure, component of a nucleolar TRAMP-like complex, an ATP-dependent exosome regulatory complex consisting of a helicase (MTREX), an oligadenylate polymerase (TENT4B or TENT4A), and a substrate specific RNA-binding factor (ZCCHC7 or ZCCHC8). Several TRAMP-like complexes exist with specific compositions and are associated with nuclear, or nucleolar RNA exosomes.

The protein resides in the nucleus. The protein localises to the nucleolus. The protein is Zinc finger CCHC domain-containing protein 7 (ZCCHC7) of Homo sapiens (Human).